A 576-amino-acid chain; its full sequence is 9-cis-epoxycarotenoid dioxygenase NCED2, chloroplastic (576 aa).

The N-terminal 34 residues, 1–34 (MEVPIAAMTFAHPANVMTLASRQPKSKRSHISPA), are a transit peptide targeting the chloroplast. H270, H319, H385, and H563 together coordinate Fe cation.

The protein belongs to the carotenoid oxygenase family. Fe(2+) serves as cofactor.

The protein localises to the plastid. It is found in the chloroplast. It carries out the reaction a 9-cis-epoxycarotenoid + O2 = a 12'-apo-carotenal + 2-cis,4-trans-xanthoxin. The catalysed reaction is 9-cis-violaxanthin + O2 = (3S,5R,6S)-5,6-epoxy-3-hydroxy-5,6-dihydro-12'-apo-beta-caroten-12'-al + 2-cis,4-trans-xanthoxin. The enzyme catalyses 9'-cis-neoxanthin + O2 = (3S,5R,6R)-3,5-dihydroxy-6,7-didehydro-5,6-dihydro-12'-apo-beta-caroten-12'-al + 2-cis,4-trans-xanthoxin. Functionally, has a 11,12(11',12') 9-cis epoxycarotenoid cleavage activity. Catalyzes the first step of abscisic-acid biosynthesis from carotenoids. This is 9-cis-epoxycarotenoid dioxygenase NCED2, chloroplastic from Oryza sativa subsp. japonica (Rice).